Consider the following 1142-residue polypeptide: E3 ubiquitin-protein ligase TRIM33 (1142 aa).

Positions 1-18 (MAENKGGGEAESGGGGSG) are enriched in gly residues. The segment at 1 to 132 (MAENKGGGEA…PGSSSGPPLG (132 aa)) is disordered. Residues 1–163 (MAENKGGGEA…AEPKLLPCLH (163 aa)) form a necessary for E3 ubiquitin-protein ligase activity and repression of SMAD4 signaling and transcriptional repression region. A compositionally biased stretch (low complexity) spans 19-42 (SAPVTAGAAGPTAQEAEPPLAAVL). Over residues 52-64 (RAGAEGGAAGPDD) the composition is skewed to gly residues. Over residues 65–99 (GGVAAASSSSAPAASVPAASVGSAVPGGAASTPAP) the composition is skewed to low complexity. Over residues 100-122 (AAAPAPAPAPAPAPAPAPAPAPA) the composition is skewed to pro residues. The segment at 141 to 201 (CAVCQQSLQS…VGVIRCPVCR (61 aa)) adopts an RING-type zinc-finger fold. B box-type zinc fingers lie at residues 228–275 (KSEQ…IRKK) and 287–328 (QRPV…YQFL). Zn(2+) contacts are provided by C233, C236, C257, H261, C292, H295, C315, and H320. Residues 315–417 (CQLLEHKEHR…QMKLLQQQND (103 aa)) form a necessary for oligomerization region. A coiled-coil region spans residues 315 to 417 (CQLLEHKEHR…QMKLLQQQND (103 aa)). Residues K345, K350, K497, and K520 each participate in a glycyl lysine isopeptide (Lys-Gly) (interchain with G-Cter in SUMO2) cross-link. R531 bears the Asymmetric dimethylarginine; alternate mark. An Omega-N-methylarginine; alternate modification is found at R531. K543 is covalently cross-linked (Glycyl lysine isopeptide (Lys-Gly) (interchain with G-Cter in SUMO2)). R551 carries the post-translational modification Omega-N-methylarginine. At R593 the chain carries Asymmetric dimethylarginine. R607 is subject to Asymmetric dimethylarginine; alternate. Omega-N-methylarginine; alternate is present on R607. 2 positions are modified to asymmetric dimethylarginine: R614 and R620. 3 disordered regions span residues 657 to 676 (PTSP…TSPS), 688 to 707 (NPEN…EDAG), and 718 to 834 (YISG…PPLS). Residues 738-774 (PSALSPGSSGLSNSHTPVRPPSTSSTGSRGSCGSSGR) are compositionally biased toward low complexity. 2 stretches are compositionally biased toward basic and acidic residues: residues 775-794 (TAEK…KQEP) and 808-817 (KQEKTEDGRR). 2 positions are modified to N6-acetyllysine; alternate: K778 and K784. Glycyl lysine isopeptide (Lys-Gly) (interchain with G-Cter in SUMO2); alternate cross-links involve residues K778 and K784. K789 participates in a covalent cross-link: Glycyl lysine isopeptide (Lys-Gly) (interchain with G-Cter in SUMO2). Glycyl lysine isopeptide (Lys-Gly) (interchain with G-Cter in SUMO2); alternate cross-links involve residues K791 and K808. Residues K791 and K808 each participate in a glycyl lysine isopeptide (Lys-Gly) (interchain with G-Cter in SUMO1); alternate cross-link. K808 carries the post-translational modification N6-acetyllysine; alternate. K811 is covalently cross-linked (Glycyl lysine isopeptide (Lys-Gly) (interchain with G-Cter in SUMO2)). Residue S818 is modified to Phosphoserine. A compositionally biased stretch (low complexity) spans 822–834 (LSSPESSLTPPLS). T830 is modified (phosphothreonine). K876 participates in a covalent cross-link: Glycyl lysine isopeptide (Lys-Gly) (interchain with G-Cter in SUMO2). Position 877 is a phosphoserine (S877). The PHD-type zinc finger occupies 902-949 (EDWCAVCQNGGDLLCCEKCPKVFHLTCHVPTLLSFPSGDWICTFCRDI). K966 carries the N6-acetyllysine modification. An N6-acetyllysine; alternate modification is found at K968. A Glycyl lysine isopeptide (Lys-Gly) (interchain with G-Cter in SUMO2); alternate cross-link involves residue K968. Residues 972–1095 (GLSPVDQRKC…LYFEDKLSEI (124 aa)) enclose the Bromo domain. Glycyl lysine isopeptide (Lys-Gly) (interchain with G-Cter in SUMO2) cross-links involve residues K1022 and K1058. Residue T1066 is modified to Phosphothreonine. K1072 participates in a covalent cross-link: Glycyl lysine isopeptide (Lys-Gly) (interchain with G-Cter in SUMO2). The interval 1103–1142 (PLPEFEQDEDDGEVTEDSDEDFIQPRRKRLKSDERPVHIK) is disordered. The span at 1107–1124 (FEQDEDDGEVTEDSDEDF) shows a compositional bias: acidic residues. Position 1117 is a phosphothreonine (T1117). Phosphoserine is present on S1120. K1133 is covalently cross-linked (Glycyl lysine isopeptide (Lys-Gly) (interchain with G-Cter in SUMO2)). Basic and acidic residues predominate over residues 1133–1142 (KSDERPVHIK). Phosphoserine is present on S1134.

Belongs to the TRIM/RBCC family. Homooligomer and heterooligomer with TRIM24 and TRIM28 family members. Interacts with SMAD4 in unstimulated cells. Found in a complex with SMAD2 and SMAD3 upon addition of TGF-beta. Interacts with SMAD2 and SMAD3. Interacts with SMAD4 under basal and induced conditions and, upon TGF-beta signaling, with activated SMAD2. Forms a ternary complex with SMAD4 and SMAD2 upon TGF-beta signaling. Post-translationally, sumoylated with SUMO1. In terms of tissue distribution, ubiquitous with high level in testis.

The protein resides in the nucleus. The enzyme catalyses S-ubiquitinyl-[E2 ubiquitin-conjugating enzyme]-L-cysteine + [acceptor protein]-L-lysine = [E2 ubiquitin-conjugating enzyme]-L-cysteine + N(6)-ubiquitinyl-[acceptor protein]-L-lysine.. Its pathway is protein modification; protein ubiquitination. Functionally, acts as an E3 ubiquitin-protein ligase. Promotes SMAD4 ubiquitination, nuclear exclusion and degradation via the ubiquitin proteasome pathway. May act as a transcriptional repressor. Inhibits the transcriptional response to TGF-beta/BMP signaling cascade. Plays a role in the control of cell proliferation. Its association with SMAD2 and SMAD3 stimulates erythroid differentiation of hematopoietic stem/progenitor. Monoubiquitinates SMAD4 and acts as an inhibitor of SMAD4-dependent TGF-beta/BMP signaling cascade (Monoubiquitination of SMAD4 hampers its ability to form a stable complex with activated SMAD2/3 resulting in inhibition of TGF-beta/BMP signaling cascade). This is E3 ubiquitin-protein ligase TRIM33 (Trim33) from Mus musculus (Mouse).